The chain runs to 152 residues: D-aminoacyl-tRNA deacylase (152 aa).

The Gly-cisPro motif, important for rejection of L-amino acids signature appears at 142–143 (GP).

The protein belongs to the DTD family. In terms of assembly, homodimer.

Its subcellular location is the cytoplasm. The catalysed reaction is glycyl-tRNA(Ala) + H2O = tRNA(Ala) + glycine + H(+). It catalyses the reaction a D-aminoacyl-tRNA + H2O = a tRNA + a D-alpha-amino acid + H(+). Functionally, an aminoacyl-tRNA editing enzyme that deacylates mischarged D-aminoacyl-tRNAs. Also deacylates mischarged glycyl-tRNA(Ala), protecting cells against glycine mischarging by AlaRS. Acts via tRNA-based rather than protein-based catalysis; rejects L-amino acids rather than detecting D-amino acids in the active site. By recycling D-aminoacyl-tRNA to D-amino acids and free tRNA molecules, this enzyme counteracts the toxicity associated with the formation of D-aminoacyl-tRNA entities in vivo and helps enforce protein L-homochirality. This Paraburkholderia phytofirmans (strain DSM 17436 / LMG 22146 / PsJN) (Burkholderia phytofirmans) protein is D-aminoacyl-tRNA deacylase.